Consider the following 142-residue polypeptide: Large ribosomal subunit protein uL11 (142 aa).

The protein belongs to the universal ribosomal protein uL11 family. Part of the ribosomal stalk of the 50S ribosomal subunit. Interacts with L10 and the large rRNA to form the base of the stalk. L10 forms an elongated spine to which L12 dimers bind in a sequential fashion forming a multimeric L10(L12)X complex. Post-translationally, one or more lysine residues are methylated.

Functionally, forms part of the ribosomal stalk which helps the ribosome interact with GTP-bound translation factors. The sequence is that of Large ribosomal subunit protein uL11 from Aliivibrio fischeri (strain MJ11) (Vibrio fischeri).